The sequence spans 66 residues: Large ribosomal subunit protein bL31 (66 aa).

Residues C16, C18, C36, and C39 each contribute to the Zn(2+) site.

This sequence belongs to the bacterial ribosomal protein bL31 family. Type A subfamily. In terms of assembly, part of the 50S ribosomal subunit. The cofactor is Zn(2+).

Its function is as follows. Binds the 23S rRNA. The protein is Large ribosomal subunit protein bL31 of Priestia megaterium (Bacillus megaterium).